Consider the following 358-residue polypeptide: Protein ocs (358 aa).

It belongs to the lysopine/nopaline/octopine/opine/vitopine dehydrogenases family.

The enzyme catalyses D-octopine + NAD(+) + H2O = L-arginine + pyruvate + NADH + H(+). It catalyses the reaction D-lysopine + NADP(+) + H2O = L-lysine + pyruvate + NADPH + H(+). Functionally, reductive condensation of pyruvate and arginine, lysine, histidine, or octopine to form octopine, lysopine, histopine, or octopinic acid, respectively. NADPH is the preferred cofactor, but NADH can also be used. In Agrobacterium vitis (Rhizobium vitis), this protein is Protein ocs (ocs).